An 828-amino-acid polypeptide reads, in one-letter code: Deubiquitinase MYSM1 (828 aa).

Residues 1-12 (MAAEEADVDIEG) are compositionally biased toward acidic residues. Positions 1–31 (MAAEEADVDIEGDVVAAAGAQPGSGENTASV) are disordered. Residue Ser110 is modified to Phosphoserine. The SANT domain occupies 116-167 (SYSVKWTIEEKELFEQGLAKFGRRWTKISKLIGSRTVLQVKSYARQYFKNKV). A Glycyl lysine isopeptide (Lys-Gly) (interchain with G-Cter in SUMO2) cross-link involves residue Lys187. Residue Ser218 is modified to Phosphoserine. Thr236 carries the phosphothreonine modification. Phosphoserine is present on residues Ser242, Ser267, and Ser340. Positions 372–470 (LKPPEQEIEI…FGCEQAVYNR (99 aa)) constitute an SWIRM domain. The region spanning 577–709 (VKVASEALLI…PLPYSQITCL (133 aa)) is the MPN domain. Positions 656, 658, and 669 each coordinate Zn(2+). A JAMM motif motif is present at residues 656–669 (HSHPAFDPNPSLRD). Residues 774 to 778 (LQKLL) carry the LXXLL motif motif.

This sequence belongs to the peptidase M67A family. MYSM1 subfamily. Component of a large chromatin remodeling complex, at least composed of MYSM1, PCAF, RBM10 and KIF11/TRIP5. Binds histones. Interacts with NFIL3; this interaction is critical for their correct recruitment to the ID2 locus during natural killer cell maturation.

Its subcellular location is the nucleus. It localises to the cytoplasm. Its function is as follows. Metalloprotease with deubiquitinase activity that plays important regulator roles in hematopoietic stem cell function, blood cell production and immune response. Participates in the normal programming of B-cell responses to antigen after the maturation process. Within the cytoplasm, plays critical roles in the repression of innate immunity and autoimmunity. Removes 'Lys-63'-linked polyubiquitins from TRAF3 and TRAF6 complexes. Attenuates NOD2-mediated inflammation and tissue injury by promoting 'Lys-63'-linked deubiquitination of RIPK2 component. Suppresses the CGAS-STING1 signaling pathway by cleaving STING1 'Lys-63'-linked ubiquitin chains. In the nucleus, acts as a hematopoietic transcription regulator derepressing a range of genes essential for normal stem cell differentiation including EBF1 and PAX5 in B-cells, ID2 in NK-cell progenitor or FLT3 in dendritic cell precursors. Deubiquitinates monoubiquitinated histone H2A, a specific tag for epigenetic transcriptional repression, leading to dissociation of histone H1 from the nucleosome. This Homo sapiens (Human) protein is Deubiquitinase MYSM1 (MYSM1).